We begin with the raw amino-acid sequence, 1507 residues long: MNTIYLVPFFLGTFSGFLATLPIGPAKILAVRKFLLISKGNENEVYNLKSSNTILLASLCGLIFAQFLFVLALQFPFLYSLWVKPHFFSFFFVLVLFIYLYQIKNIQFDISNNQFLLKSESNFSYQQAAFLETLLLQLLNPVVLPNPVFCRLTNVFLFRYSTISTFFAGNFLGLLSGYGIFFLSTLFLLKRLEEDAPTIYRLVKIKIHQFFGIILVIFSFLCLSRTPLPAIKPFKLKEISTTFSSTKVWYENIWPDSFFGYDRWKRPLRLISVDEKKSQPNNELKPFNKMFFSQFFFEGGIQDGNYRLVHNFPQSLSLISQNINSILNNKLNNSQIESIEKNKNFIDEWIQEKKNRQNQISQNINTKIKHIEKGSYLEELVEKKFSSFDNNKNKISKQMDPRLNADIRGKKFFFKNKSFLFLTKEFFSKKDSLFAVEKKNLIDTYTKNKFKLFLTENSQNLSSLETRTEKIPFITWKPIIQSFYDKNQNLKETSLDQNNVVKDQLDLDGLKNKRSWHSLFKKISPPFSSESSMGEKLINFENELKQEENNSKMAQIYKPMPLWNLNFNKKELNLLKRQSNNKLHLKIFFPKSNHLADRQNFVPPLMPFFRRNEFPGTITSRRGKAVCWNTFQKKPHSPLFIHHLNLLKNFFAKRKKIQINQDVPTKSWQSTSKLFQFLRDYLLSLQAYIRKYLKLPFLIIIKNFIRQLFFQPAEWEKDWTNLSKEVYVQCDFYGKAGSVGVKLPNFFANDEPKQIKIVNPFELRFWTRSFSEQSSLQESENSSFLNVWGRETKMPFGKVKKSPSFWQLFIERIKLILQYKILKNLSVSSSIDSIEIQKEIKNPRIQSQIDVQQNFQIEQSKRNLGTKDEEKVKNLNKKIIDNNFKYKTTKRKIVNNSTQNKTFSDFNKKEKINRTRQYTFQNMSILLQRQWFHFYRLFLKKERELFFELQTKMFEMKKIISRKNTKVIKIFLKLFYNVSRFLRSLYYQISEFFNWLSLKFVKNQKEISSNIDAFDLKPTKNLSQAYIIHSIWEDRMMSRPNITSLMKSWNQNVSLKNNLENFLNKQGILGNEKPENLTEHQWQEWLKNFRVYTPSLKLWALWAPNYWTQAVEQYWKELPSSKLKSILNQEPNKINKSLNFTTSLDNSTLNKFLEPHLPLFQAVQKQKKLWKFNILSRNYTEVTNDGDIDSFFSWQTTDFDKKTHYLFDTLKKVKGKDKNLIVSPINLSSLPQIKENKLKRNLSQQNIKKELPLIQREKKRLDFDIKLQTLRQRGTFFPVSTRRWKLKKLKNKLEKLAKTVIKKPQSGELSSSLTIGEKNKKLIRELFVAENRLFTNILENWNSKVLDDELLMYNTISSILRFANKNINALAINNSDSLSLFPRNILRPLDLNFLLLEDIYLPTYLREMKILEYFHFEKENQNIPSTSTVSHSHFSNKKEKTIYAETINKWHLILQQKQNVIKDRQTIVRFLWPTHRLEDLSCINRFWLGTANQSRFSILRIQTVPNI.

6 consecutive transmembrane segments (helical) span residues 4 to 24, 53 to 73, 81 to 101, 129 to 149, 163 to 183, and 202 to 222; these read IYLV…LPIG, TILL…VLAL, LWVK…IYLY, AFLE…NPVF, ISTF…IFFL, and LVKI…SFLC.

The protein belongs to the TIC214 family. In terms of assembly, part of the Tic complex.

The protein resides in the plastid. The protein localises to the chloroplast inner membrane. Its function is as follows. Involved in protein precursor import into chloroplasts. May be part of an intermediate translocation complex acting as a protein-conducting channel at the inner envelope. The chain is Protein TIC 214 from Staurastrum punctulatum (Green alga).